The sequence spans 180 residues: Succinate dehydrogenase cytochrome B subunit, mitochondrial (180 aa).

The Mitochondrial matrix segment spans residues 1–82; that stretch reads MFATRSFCLS…WYLSSLHRIT (82 aa). Residues 83 to 103 traverse the membrane as a helical segment; it reads GCVVAGTLYAFAMGYLVAPLA. The Mitochondrial intermembrane segment spans residues 104-122; the sequence is GYSLDTATISGLIQQVPTW. Residues 123 to 143 form a helical membrane-spanning segment; that stretch reads IKVPAKFVISYPLTFHIFNGI. Histidine 138 contributes to the heme binding site. Topologically, residues 144 to 159 are mitochondrial matrix; it reads RHLIWDTTKELSLKGV. Residues 160-180 form a helical membrane-spanning segment; sequence YRTGYAVLALSVLTSGYFAMI.

It belongs to the cytochrome b560 family. In terms of assembly, forms part of complex II containing four subunits: a 70 kDa flavoprotein (FP), a 27 kDa iron-sulfur protein (IP), a cytochrome B and a membrane-anchoring protein. The cofactor is heme.

The protein resides in the mitochondrion inner membrane. Its pathway is carbohydrate metabolism; tricarboxylic acid cycle. Membrane-anchoring subunit of succinate dehydrogenase (SDH) that is involved in complex II of the mitochondrial electron transport chain and is responsible for transferring electrons from succinate to ubiquinone (coenzyme Q). The sequence is that of Succinate dehydrogenase cytochrome B subunit, mitochondrial (sdh3) from Schizosaccharomyces pombe (strain 972 / ATCC 24843) (Fission yeast).